Consider the following 697-residue polypeptide: Portal protein (697 aa).

Residues 633–697 (MSREAAGGVP…RRAGGPYGFH (65 aa)) are disordered. Basic and acidic residues predominate over residues 664–689 (ITADEERRGPERVGRFRNGGPDDPRR).

The protein belongs to the herpesviridae portal protein family. In terms of assembly, homododecamerizes. Interacts with terminase subunits TRM1 and TRM3.

The protein resides in the virion. It localises to the host nucleus. Functionally, forms a portal in the viral capsid through which viral DNA is translocated during DNA packaging. Assembles as a dodecamer at a single fivefold axe of the T=16 icosahedric capsid. Binds to the molecular motor that translocates the viral DNA, termed terminase. In Homo sapiens (Human), this protein is Portal protein (UL104).